A 488-amino-acid chain; its full sequence is Acetyl-coenzyme A carboxylase carboxyl transferase subunit beta, chloroplastic (488 aa).

The interval 189 to 211 (ISGSDSGSSNIRTDGNGSDIRGR) is disordered. A CoA carboxyltransferase N-terminal domain is found at 224-488 (LWVQCENCYG…LHGFFPLTQN (265 aa)). 4 residues coordinate Zn(2+): cysteine 228, cysteine 231, cysteine 247, and cysteine 250. The C4-type zinc-finger motif lies at 228–250 (CENCYGLNYKKFFKSKMNICEQC).

Belongs to the AccD/PCCB family. In terms of assembly, acetyl-CoA carboxylase is a heterohexamer composed of biotin carboxyl carrier protein, biotin carboxylase and 2 subunits each of ACCase subunit alpha and ACCase plastid-coded subunit beta (accD). The cofactor is Zn(2+).

Its subcellular location is the plastid. It is found in the chloroplast stroma. The catalysed reaction is N(6)-carboxybiotinyl-L-lysyl-[protein] + acetyl-CoA = N(6)-biotinyl-L-lysyl-[protein] + malonyl-CoA. It participates in lipid metabolism; malonyl-CoA biosynthesis; malonyl-CoA from acetyl-CoA: step 1/1. Its function is as follows. Component of the acetyl coenzyme A carboxylase (ACC) complex. Biotin carboxylase (BC) catalyzes the carboxylation of biotin on its carrier protein (BCCP) and then the CO(2) group is transferred by the transcarboxylase to acetyl-CoA to form malonyl-CoA. The protein is Acetyl-coenzyme A carboxylase carboxyl transferase subunit beta, chloroplastic of Liriodendron tulipifera (Tuliptree).